We begin with the raw amino-acid sequence, 234 residues long: Purine nucleoside phosphorylase DeoD-type (234 aa).

H4 provides a ligand contact to a purine D-ribonucleoside. Residues G20, R24, R43, and 87–90 (RIGS) each bind phosphate. Residues E162, 179 to 181 (EME), and 203 to 204 (SD) each bind a purine D-ribonucleoside. Catalysis depends on D204, which acts as the Proton donor.

The protein belongs to the PNP/UDP phosphorylase family. As to quaternary structure, homohexamer; trimer of homodimers.

It carries out the reaction a purine D-ribonucleoside + phosphate = a purine nucleobase + alpha-D-ribose 1-phosphate. The enzyme catalyses a purine 2'-deoxy-D-ribonucleoside + phosphate = a purine nucleobase + 2-deoxy-alpha-D-ribose 1-phosphate. In terms of biological role, catalyzes the reversible phosphorolytic breakdown of the N-glycosidic bond in the beta-(deoxy)ribonucleoside molecules, with the formation of the corresponding free purine bases and pentose-1-phosphate. The protein is Purine nucleoside phosphorylase DeoD-type of Jannaschia sp. (strain CCS1).